The following is a 119-amino-acid chain: MTRVPRGYIARRRRTKMRSFASNFRGAHLRLNRMITQQVKRAFVSSHRDRGRQKRDFRRLWITRINAATRVYKVFDSYSKLIHNLYKKKLILNRKMLAQVAVSNPNNLYTISNKIKIIN.

It belongs to the bacterial ribosomal protein bL20 family.

Its subcellular location is the plastid. It localises to the chloroplast. Functionally, binds directly to 23S ribosomal RNA and is necessary for the in vitro assembly process of the 50S ribosomal subunit. It is not involved in the protein synthesizing functions of that subunit. The polypeptide is Large ribosomal subunit protein bL20c (Triticum aestivum (Wheat)).